The sequence spans 122 residues: Interferon alpha-inducible protein 27, mitochondrial (122 aa).

The N-terminal 33 residues, 1–33 (MEASALTSSAVTSVAKVVRVASGSAVVLPLARI), are a transit peptide targeting the mitochondrion. Residues 34–57 (ATVVIGGVVAMAAVPMVLSAMGFT) traverse the membrane as a helical segment. Residue Lys-69 forms a Glycyl lysine isopeptide (Lys-Gly) (interchain with G-Cter in ubiquitin) linkage. Helical transmembrane passes span 71–91 (MSAAAIANGGGVASGSLVATL) and 99–119 (LSGLTKFILGSIGSAIAAVIA). The segment at 76–122 (IANGGGVASGSLVATLQSLGATGLSGLTKFILGSIGSAIAAVIARFY) is mediates interaction with SKP2 and hepatitis C virus non-structural protein NS5A. Residues 103–112 (TKFILGSIGS) form a required for hepatitis C virus non-structural protein NS5A degradation region.

Belongs to the IFI6/IFI27 family. As to quaternary structure, homodimer. Interacts with hepatitis C virus/HCV non-structural protein NS5A; promotes the ubiquitin-mediated proteasomal degradation of NS5A. Interacts with SKP2; promotes the ubiquitin-mediated proteasomal degradation of NS5A. Interacts with NR4A1. May interact with BCL2. Ubiquitinated by TRIM21 via 'Lys-6'-linked ubiquitin chains leading to IFI27 mitochondrial migration.

It localises to the mitochondrion membrane. It is found in the nucleus inner membrane. The protein resides in the endoplasmic reticulum membrane. In terms of biological role, probable adapter protein involved in different biological processes. Part of the signaling pathways that lead to apoptosis. Involved in type-I interferon-induced apoptosis characterized by a rapid and robust release of cytochrome C from the mitochondria and activation of BAX and caspases 2, 3, 6, 8 and 9. Also functions in TNFSF10-induced apoptosis. May also have a function in the nucleus, where it may be involved in the interferon-induced negative regulation of the transcriptional activity of NR4A1, NR4A2 and NR4A3 through the enhancement of XPO1-mediated nuclear export of these nuclear receptors. May thereby play a role in the vascular response to injury. In the innate immune response, has an antiviral activity towards hepatitis C virus/HCV. May prevent the replication of the virus by recruiting both the hepatitis C virus non-structural protein 5A/NS5A and the ubiquitination machinery via SKP2, promoting the ubiquitin-mediated proteasomal degradation of NS5A. Also promotes virus-induced pyroptosis by activating CASP3 in the mitochondria after 'Lys-6'-linked ubiquitination by TRIM21. This chain is Interferon alpha-inducible protein 27, mitochondrial, found in Homo sapiens (Human).